A 323-amino-acid chain; its full sequence is PTS system mannose-specific EIIAB component (323 aa).

The PTS EIIA type-4 domain occupies 2-124 (TIAIVIGTHG…VALAVETGRE (123 aa)). His10 serves as the catalytic Tele-phosphohistidine intermediate; for EIIA activity. His10 is modified (phosphohistidine; by HPr). Residue Lys55 is modified to N6-acetyllysine. The interval 137–155 (AAPAPAAAAPKAAPTPAKP) is hinge. In terms of domain architecture, PTS EIIB type-4 spans 157 to 320 (GPNDYMVIGL…KLKMMDLISK (164 aa)). Catalysis depends on His175, which acts as the Pros-phosphohistidine intermediate; for EIIB activity. The residue at position 175 (His175) is a Phosphohistidine; by EIIA. At Lys234 the chain carries N6-acetyllysine.

In terms of assembly, homodimer.

The protein resides in the cytoplasm. Its subcellular location is the cell inner membrane. It carries out the reaction D-mannose(out) + N(pros)-phospho-L-histidyl-[protein] = D-mannose 6-phosphate(in) + L-histidyl-[protein]. Its function is as follows. The phosphoenolpyruvate-dependent sugar phosphotransferase system (sugar PTS), a major carbohydrate active transport system, catalyzes the phosphorylation of incoming sugar substrates concomitantly with their translocation across the cell membrane. The enzyme II ManXYZ PTS system is involved in mannose transport. This chain is PTS system mannose-specific EIIAB component (manX), found in Escherichia coli O157:H7.